The following is a 299-amino-acid chain: Ribosomal protein L11 methyltransferase (299 aa).

The S-adenosyl-L-methionine site is built by T149, G170, D192, and N234.

This sequence belongs to the methyltransferase superfamily. PrmA family.

It localises to the cytoplasm. The enzyme catalyses L-lysyl-[protein] + 3 S-adenosyl-L-methionine = N(6),N(6),N(6)-trimethyl-L-lysyl-[protein] + 3 S-adenosyl-L-homocysteine + 3 H(+). In terms of biological role, methylates ribosomal protein L11. The chain is Ribosomal protein L11 methyltransferase from Chromohalobacter salexigens (strain ATCC BAA-138 / DSM 3043 / CIP 106854 / NCIMB 13768 / 1H11).